The chain runs to 819 residues: Proteome of basal body protein 15 (819 aa).

Composition is skewed to low complexity over residues 46 to 59 (PASS…NPGR) and 572 to 581 (RQQQQQQQHT). 2 disordered regions span residues 46–72 (PASS…LATG) and 564–590 (ERQR…GGGV). A coiled-coil region spans residues 546–580 (YVVLREAVARVQARMEQQERQRRLLERQQQQQQQH).

Its subcellular location is the cytoplasm. It is found in the cytoskeleton. It localises to the microtubule organizing center. The protein localises to the centrosome. The protein resides in the centriole. In Chlamydomonas reinhardtii (Chlamydomonas smithii), this protein is Proteome of basal body protein 15.